We begin with the raw amino-acid sequence, 165 residues long: IQSTSMDQGSLSEDSMNSFIRTLIQAGIWKNKVLRQTARTMDGIETTXKXTXAEPXVIAXKDIRLGFQSIVSVDAELLRQQRRFSSPRVLXNENTPLEPPPLYLMEEPMVLTXTSXXXRFAXXXXHRGEYSVCDSESRWVTDKSSAVDIRGHQVTVLGEIRMGPS.

The signal sequence occupies residues 1-3; the sequence is IQS. A propeptide spanning residues 4-119 is cleaved from the precursor; that stretch reads TSMDQGSLSE…VLTXTSXXXR (116 aa).

The protein belongs to the NGF-beta family.

The protein resides in the secreted. Functionally, seems to promote the survival of visceral and proprioceptive sensory neurons. This Tropidophis haetianus (Haitian dwarf boa) protein is Neurotrophin-3 (NTF3).